Here is a 428-residue protein sequence, read N- to C-terminus: ORC1-type DNA replication protein 5 (428 aa).

ATP-binding positions include Thr-62–Leu-66, Tyr-219, and Arg-231.

It belongs to the CDC6/cdc18 family.

Involved in regulation of DNA replication. This chain is ORC1-type DNA replication protein 5 (orc5), found in Halobacterium salinarum (strain ATCC 700922 / JCM 11081 / NRC-1) (Halobacterium halobium).